The following is a 294-amino-acid chain: Probable ABC transporter permease protein YqgI (294 aa).

Helical transmembrane passes span phenylalanine 14–isoleucine 34, phenylalanine 66–phenylalanine 86, phenylalanine 99–leucine 121, leucine 126–methionine 148, isoleucine 190–phenylalanine 210, and alanine 260–alanine 280. The ABC transmembrane type-1 domain occupies leucine 62–alanine 280.

The protein belongs to the binding-protein-dependent transport system permease family. CysTW subfamily.

The protein localises to the cell membrane. Functionally, part of the binding-protein-dependent transport system YqgGHIJK. Probably responsible for the translocation of the substrate across the membrane. In Bacillus subtilis (strain 168), this protein is Probable ABC transporter permease protein YqgI (yqgI).